Consider the following 882-residue polypeptide: Alanine--tRNA ligase (882 aa).

Residues H570, H574, C672, and H676 each contribute to the Zn(2+) site.

Belongs to the class-II aminoacyl-tRNA synthetase family. It depends on Zn(2+) as a cofactor.

The protein resides in the cytoplasm. It carries out the reaction tRNA(Ala) + L-alanine + ATP = L-alanyl-tRNA(Ala) + AMP + diphosphate. Functionally, catalyzes the attachment of alanine to tRNA(Ala) in a two-step reaction: alanine is first activated by ATP to form Ala-AMP and then transferred to the acceptor end of tRNA(Ala). Also edits incorrectly charged Ser-tRNA(Ala) and Gly-tRNA(Ala) via its editing domain. This Xanthomonas campestris pv. campestris (strain B100) protein is Alanine--tRNA ligase.